A 271-amino-acid chain; its full sequence is Tryptophan synthase alpha chain (271 aa).

Residues E49 and D60 each act as proton acceptor in the active site.

The protein belongs to the TrpA family. As to quaternary structure, tetramer of two alpha and two beta chains.

The enzyme catalyses (1S,2R)-1-C-(indol-3-yl)glycerol 3-phosphate + L-serine = D-glyceraldehyde 3-phosphate + L-tryptophan + H2O. It functions in the pathway amino-acid biosynthesis; L-tryptophan biosynthesis; L-tryptophan from chorismate: step 5/5. Functionally, the alpha subunit is responsible for the aldol cleavage of indoleglycerol phosphate to indole and glyceraldehyde 3-phosphate. This chain is Tryptophan synthase alpha chain, found in Yersinia pestis bv. Antiqua (strain Angola).